The primary structure comprises 366 residues: tRNA/tmRNA (uracil-C(5))-methyltransferase (366 aa).

Positions 190, 218, 223, 239, and 299 each coordinate S-adenosyl-L-methionine. Cys-324 serves as the catalytic Nucleophile. The active-site Proton acceptor is Glu-358.

Belongs to the class I-like SAM-binding methyltransferase superfamily. RNA M5U methyltransferase family. TrmA subfamily.

It carries out the reaction uridine(54) in tRNA + S-adenosyl-L-methionine = 5-methyluridine(54) in tRNA + S-adenosyl-L-homocysteine + H(+). The catalysed reaction is uridine(341) in tmRNA + S-adenosyl-L-methionine = 5-methyluridine(341) in tmRNA + S-adenosyl-L-homocysteine + H(+). Its function is as follows. Dual-specificity methyltransferase that catalyzes the formation of 5-methyluridine at position 54 (m5U54) in all tRNAs, and that of position 341 (m5U341) in tmRNA (transfer-mRNA). This is tRNA/tmRNA (uracil-C(5))-methyltransferase from Salmonella typhi.